Reading from the N-terminus, the 576-residue chain is Zinc finger protein 791 (576 aa).

The KRAB domain maps to 4–90; that stretch reads VAFEDVSVSF…AENFSPNLSV (87 aa). 17 C2H2-type zinc fingers span residues 100–122, 132–154, 160–182, 188–210, 216–238, 244–266, 272–294, 300–322, 328–350, 356–378, 384–406, 412–434, 440–462, 468–490, 496–518, 524–546, and 552–574; these read YECT…MRSH, YKCK…ERSH, YKCK…ERTH, YECK…ERIH, YECK…ERTH, YACK…MITH, YKCK…ERIH, YKCK…VRVH, YECK…KRNH, YECK…MITH, YKCR…ERTH, YECK…KRTH, YECK…MRMH, YKCK…TRIH, and LECK…MRMH.

Belongs to the krueppel C2H2-type zinc-finger protein family.

The protein localises to the nucleus. May be involved in transcriptional regulation. The protein is Zinc finger protein 791 (ZNF791) of Homo sapiens (Human).